The primary structure comprises 1114 residues: Isoleucine--tRNA ligase (1114 aa).

Residues 61 to 71 (PTANGQPGTHH) carry the 'HIGH' region motif. A 'KMSKS' region motif is present at residues 640–644 (KMSKH). Lysine 643 contacts ATP.

The protein belongs to the class-I aminoacyl-tRNA synthetase family. IleS type 2 subfamily. In terms of assembly, monomer. Zn(2+) is required as a cofactor.

The protein localises to the cytoplasm. The catalysed reaction is tRNA(Ile) + L-isoleucine + ATP = L-isoleucyl-tRNA(Ile) + AMP + diphosphate. Catalyzes the attachment of isoleucine to tRNA(Ile). As IleRS can inadvertently accommodate and process structurally similar amino acids such as valine, to avoid such errors it has two additional distinct tRNA(Ile)-dependent editing activities. One activity is designated as 'pretransfer' editing and involves the hydrolysis of activated Val-AMP. The other activity is designated 'posttransfer' editing and involves deacylation of mischarged Val-tRNA(Ile). The polypeptide is Isoleucine--tRNA ligase (Cutibacterium acnes (strain DSM 16379 / KPA171202) (Propionibacterium acnes)).